We begin with the raw amino-acid sequence, 478 residues long: Septin-4 (478 aa).

The interval 1–115 (MDHSLGWQGN…RSPWGKLDPY (115 aa)) is disordered. Serine 28, serine 29, and serine 68 each carry phosphoserine. Residues 84–93 (PQPSDSQQYF) are compositionally biased toward polar residues. The span at 94-108 (SAPAPLSPSSRPRSP) shows a compositional bias: low complexity. Phosphoserine is present on residues serine 117 and serine 118. Residues 141 to 414 (KGFDFTLMVA…ENYRAQCIQS (274 aa)) form the Septin-type G domain. The interval 151–158 (GESGLGKS) is G1 motif. Residues 151 to 158 (GESGLGKS) and threonine 185 contribute to the GTP site. The G3 motif stretch occupies residues 208 to 211 (DTPG). Residues 289–292 (AKAD) are G4 motif. 290 to 298 (KADTLTPPE) lines the GTP pocket. Serine 325 carries the post-translational modification Phosphoserine. GTP is bound by residues glycine 348 and arginine 363. The interval 428–449 (LTRESGTDFPIPAVPPGTDPET) is disordered. Serine 432 is subject to Phosphoserine. Phosphothreonine is present on threonine 434. Residues 447–478 (PETEKLIREKDEELRRMQEMLHKIQRQMKETH) are a coiled coil.

The protein belongs to the TRAFAC class TrmE-Era-EngA-EngB-Septin-like GTPase superfamily. Septin GTPase family. Septins polymerize into heterooligomeric protein complexes that form filaments, and can associate with cellular membranes, actin filaments and microtubules. GTPase activity is required for filament formation. Interacts with SEPTIN8. Component of a septin core octameric complex consisting of SEPTIN12, SEPTIN7, SEPTIN6 and SEPTIN2 or SEPTIN4 in the order 12-7-6-2-2-6-7-12 or 12-7-6-4-4-6-7-12. Interacts with SEPTIN14 (via C-terminus). Interacts with DYRK1A. Interacts with SLC6A3/DAT and SNCA/alpha-synuclein. Interacts with STX1A; in the striatum. Interacts with XIAP (via BIR3 domain) following the induction of apoptosis. Interacts with AREL1 (via HECT domain); in the cytoplasm following induction of apoptosis. As to quaternary structure, interacts with DPYSL5. In terms of processing, phosphorylated by DYRK1A. Ubiquitinated by AREL1. Post-translationally, may be phosphorylated. Expressed in the cerebral cortex, striatum, midbrain, cerebellum and spinal cord (at protein level). Expressed in the substantia nigra pars compacta, ventral tegmental area, projection fiber bundles and in axon terminals surrounding striatal neurons (at protein level). Expressed in hair follicle stem cells (at protein level). Expressed in small intestinal crypts; abundantly expressed at the crypt base (at protein level). Widely expressed in the brain and to a lesser extent in the testis, lung and liver. As to expression, highly expressed in the brain and testis and, to a lesser extent in the heart, lung and kidney. In the brain, abundant in areas of high cell density, particularly in the stria terminalis. Expressed in the entorhinal, temporal and visual cortices and the hippocampus of the brain where is colocalizes with DYRK1A in postnatal day 1 and adult mice. Expressed and extensively colocalizes with DYRK1A in apical dendrites of pyramidal cells. In terms of tissue distribution, predominantly expressed in embryonic brain and dorsal root ganglion neurons. Expressed in LGR5-positive intestinal stem cells and lysozyme-positive Paneth cells (at protein level). Expressed in the brain and testis.

Its subcellular location is the cytoplasm. It is found in the cell projection. It localises to the cilium. The protein localises to the flagellum. The protein resides in the cytoplasmic vesicle. Its subcellular location is the secretory vesicle. It is found in the axon. It localises to the dendrite. The protein localises to the perikaryon. The protein resides in the synapse. Its subcellular location is the mitochondrion. It is found in the cytosol. Functionally, filament-forming cytoskeletal GTPase. Pro-apoptotic protein involved in LGR5-positive intestinal stem cell and Paneth cell expansion in the intestines, via its interaction with XIAP. May also play a role in the regulation of cell fate in the intestine. Positive regulator of apoptosis involved in hematopoietic stem cell homeostasis; via its interaction with XIAP. Negative regulator of repair and hair follicle regeneration in response to injury, due to inhibition of hair follicle stem cell proliferation, potentially via its interaction with XIAP. Plays an important role in male fertility and sperm motility. During spermiogenesis, essential for the establishment of the annulus (a fibrous ring structure connecting the midpiece and the principal piece of the sperm flagellum) which is a requisite for the structural and mechanical integrity of the sperm. Involved in the migration of cortical neurons and the formation of neuron leading processes during embryonic development. Required for dopaminergic metabolism in presynaptic autoreceptors; potentially via activity as a presynaptic scaffold protein. In Mus musculus (Mouse), this protein is Septin-4.